Here is a 379-residue protein sequence, read N- to C-terminus: Lipid-A-disaccharide synthase (379 aa).

It belongs to the LpxB family.

The catalysed reaction is a lipid X + a UDP-2-N,3-O-bis[(3R)-3-hydroxyacyl]-alpha-D-glucosamine = a lipid A disaccharide + UDP + H(+). It participates in bacterial outer membrane biogenesis; LPS lipid A biosynthesis. Its function is as follows. Condensation of UDP-2,3-diacylglucosamine and 2,3-diacylglucosamine-1-phosphate to form lipid A disaccharide, a precursor of lipid A, a phosphorylated glycolipid that anchors the lipopolysaccharide to the outer membrane of the cell. The protein is Lipid-A-disaccharide synthase of Persephonella marina (strain DSM 14350 / EX-H1).